Reading from the N-terminus, the 550-residue chain is Sterol O-acyltransferase 1 (550 aa).

Met-1 carries the N-acetylmethionine modification. The interval 1–36 (MVGEEKMSLRNRLSKSRENPEEDEDQRKPAKESLEA) is disordered. Residues 1-138 (MVGEEKMSLR…LDELLEVDHI (138 aa)) lie on the Cytoplasmic side of the membrane. Residue Ser-8 is modified to Phosphoserine. Residues 15 to 34 (KSRENPEEDEDQRKPAKESL) show a composition bias toward basic and acidic residues. His-137 contacts cholesterol. Residues 139 to 160 (RTIYHMFIALLILFILSTLVVD) form a helical membrane-spanning segment. Residues 161–180 (YIDEGRLVLEFSLLSYAFGK) are Lumenal-facing. Residues 181 to 206 (FPTVVWTWWIMFLSTFSVPYFLFQRW) form a helical membrane-spanning segment. Residues 207-218 (ATGYSKSSHPLI) lie on the Cytoplasmic side of the membrane. A helical membrane pass occupies residues 219–244 (NSLFHGFLFMVFQIGILGFGPTYVVL). At 245–252 (AYTLPPAS) the chain is on the lumenal side. Residues 253 to 276 (RFIIIFEQIRFVMKAHSFVRENVP) form a helical membrane-spanning segment. The Cytoplasmic portion of the chain corresponds to 277–319 (RVLNSAKEKSSTVPIPTVNQYLYFLFAPTLIYRDSYPRNPTVR). A helical transmembrane segment spans residues 320 to 352 (WGYVAMQFAQVFGCFFYVYYIFERLCAPLFRNI). Over 353-369 (KQEPFSARVLVLCVFNS) the chain is Lumenal. The chain crosses the membrane as a helical span at residues 370-395 (ILPGVLILFLTFFAFLHCWLNAFAEM). The Cytoplasmic segment spans residues 396–443 (LRFGDRMFYKDWWNSTSYSNYYRTWNVVVHDWLYYYAYKDFLWFFSKR). Residues 403–409 (FYKDWWN) carry the FYXDWWN motif motif. The an acyl-CoA site is built by Asn-415, Arg-418, Asn-421, His-425, Tyr-433, Lys-445, and Ser-456. The chain crosses the membrane as a helical span at residues 444–468 (FKSAAMLAAFAVSAVVHEYALAVCL). His-460 is a catalytic residue. Over 469–474 (SFFYPV) the chain is Lumenal. Residues 475-490 (LFVLFMFFGMAFNFIV) form a helical membrane-spanning segment. Residues 491-496 (NDSRKK) are Cytoplasmic-facing. A helical membrane pass occupies residues 497–528 (PIWNVMMWTSLFLGNGVLLCFYSQEWYARQHC). Cysteines 528 and 546 form a disulfide. The Lumenal portion of the chain corresponds to 529-550 (PLKNPTFLDYVRPRSWTCRYVF).

Belongs to the membrane-bound acyltransferase family. Sterol o-acyltransferase subfamily. In terms of assembly, may form homo- or heterodimers. Interacts with UBIAD1. In terms of tissue distribution, expressed in most tissues, but most strongly in the adrenal gland. Expressed more strongly in liver Kupffer cells than in hepatocytes.

Its subcellular location is the endoplasmic reticulum membrane. It catalyses the reaction a sterol + a long-chain fatty acyl-CoA = a long-chain 3-hydroxysterol ester + CoA. The catalysed reaction is cholesterol + an acyl-CoA = a cholesterol ester + CoA. The enzyme catalyses cholesterol + (9Z)-octadecenoyl-CoA = cholesteryl (9Z-octadecenoate) + CoA. It carries out the reaction cholesterol + hexadecanoyl-CoA = cholesteryl hexadecanoate + CoA. It catalyses the reaction octadecanoyl-CoA + cholesterol = cholesteryl octadecanoate + CoA. The catalysed reaction is (9Z,12Z)-octadecadienoyl-CoA + cholesterol = cholesteryl (9Z,12Z)-octadecadienoate + CoA. The enzyme catalyses (5Z,8Z,11Z,14Z)-eicosatetraenoyl-CoA + cholesterol = cholesteryl (5Z,8Z,11Z,14Z)-eicosatetraenoate + CoA. It carries out the reaction (9Z)-hexadecenoyl-CoA + cholesterol = cholesteryl (9Z)-hexadecenoate + CoA. It catalyses the reaction (11Z)-octadecenoyl-CoA + cholesterol = cholesteryl (11Z)-octadecenoate + CoA. The catalysed reaction is (7Z)-octadecenoyl-CoA + cholesterol = cholesteryl (7Z)-octadecenoate + CoA. Catalyzes the formation of fatty acid-cholesterol esters, which are less soluble in membranes than cholesterol. Plays a role in lipoprotein assembly and dietary cholesterol absorption. Preferentially utilizes oleoyl-CoA ((9Z)-octadecenoyl-CoA) as a substrate: shows a higher activity towards an acyl-CoA substrate with a double bond at the delta-9 position (9Z) than towards saturated acyl-CoA or an unsaturated acyl-CoA with a double bond at the delta-7 (7Z) or delta-11 (11Z) positions. This is Sterol O-acyltransferase 1 (SOAT1) from Macaca fascicularis (Crab-eating macaque).